The chain runs to 147 residues: Large ribosomal subunit protein uL15 (147 aa).

Residues Met1–Pro62 are disordered. 2 stretches are compositionally biased toward gly residues: residues Arg21–Ala31 and Ser42–Gly52.

It belongs to the universal ribosomal protein uL15 family. In terms of assembly, part of the 50S ribosomal subunit.

In terms of biological role, binds to the 23S rRNA. This is Large ribosomal subunit protein uL15 from Syntrophotalea carbinolica (strain DSM 2380 / NBRC 103641 / GraBd1) (Pelobacter carbinolicus).